A 353-amino-acid polypeptide reads, in one-letter code: Rhodopsin (353 aa).

Residues 1-36 (MNGTEGPYFYVPMVNTSGIVRSPYEYPQYYLVNPAA) are Extracellular-facing. N-linked (GlcNAc...) asparagine glycosylation is found at Asn2 and Asn15. A helical membrane pass occupies residues 37–61 (YAALGAYMFLLILVGFPINFLTLYV). Residues 62 to 73 (TIEHKKLRTPLN) lie on the Cytoplasmic side of the membrane. Residues 74–96 (YILLNLAVADLFMVFGGFTTTMY) form a helical membrane-spanning segment. Over 97–110 (TSMHGYFVLGRLGC) the chain is Extracellular. A disulfide bond links Cys110 and Cys187. The chain crosses the membrane as a helical span at residues 111–133 (NIEGFFATLGGEIALWSLVVLAI). The short motif at 134–136 (ERW) is the 'Ionic lock' involved in activated form stabilization element. At 134 to 152 (ERWVVVCKPISNFRFGENH) the chain is on the cytoplasmic side. A helical membrane pass occupies residues 153–173 (AIMGLAFTWLMAMACAAPPLV). The Extracellular segment spans residues 174-202 (GWSRYIPEGMQCSCGIDYYTRAEGFNNES). An N-linked (GlcNAc...) asparagine glycan is attached at Asn200. Residues 203–224 (FVIYMFVCHFLIPLMVVFFCYG) form a helical membrane-spanning segment. Residues 225–252 (RLLCAVKEAAAAQQESETTQRAEREVTR) are Cytoplasmic-facing. Residues 253–274 (MVVIMVIAFLICWCPYAGVAWW) traverse the membrane as a helical segment. Residues 275 to 286 (IFTHQGSDFGPV) are Extracellular-facing. The chain crosses the membrane as a helical span at residues 287-308 (FMTIPAFFAKSSSIYNPMIYIC). At Lys296 the chain carries N6-(retinylidene)lysine. Topologically, residues 309 to 353 (LNKQFRHCMITTLCCGKNPFEEEEGASTASKTEASSVSSSSVSPA) are cytoplasmic. Residues Cys322 and Cys323 are each lipidated (S-palmitoyl cysteine). The interval 331–353 (EEGASTASKTEASSVSSSSVSPA) is disordered. The span at 334 to 353 (ASTASKTEASSVSSSSVSPA) shows a compositional bias: low complexity.

The protein belongs to the G-protein coupled receptor 1 family. Opsin subfamily. In terms of processing, phosphorylated on some or all of the serine and threonine residues present in the C-terminal region. Contains one covalently linked retinal chromophore.

The protein localises to the membrane. The protein resides in the cell projection. It is found in the cilium. Its subcellular location is the photoreceptor outer segment. Its function is as follows. Photoreceptor required for image-forming vision at low light intensity. While most salt water fish species use retinal as chromophore, most freshwater fish use 3-dehydroretinal, or a mixture of retinal and 3-dehydroretinal. Light-induced isomerization of 11-cis to all-trans retinal triggers a conformational change that activates signaling via G-proteins. Subsequent receptor phosphorylation mediates displacement of the bound G-protein alpha subunit by arrestin and terminates signaling. This Lithognathus mormyrus (Striped seabream) protein is Rhodopsin (rho).